Here is a 202-residue protein sequence, read N- to C-terminus: Small ribosomal subunit protein uS4 (202 aa).

The segment at 18-42 is disordered; sequence LPGLTRKAAKRSYPPGQHGQARRKR. Positions 90 to 152 constitute an S4 RNA-binding domain; sequence NRLDNVCFRL…KPSKKLAETN (63 aa).

This sequence belongs to the universal ribosomal protein uS4 family. As to quaternary structure, part of the 30S ribosomal subunit. Contacts protein S5. The interaction surface between S4 and S5 is involved in control of translational fidelity.

One of the primary rRNA binding proteins, it binds directly to 16S rRNA where it nucleates assembly of the body of the 30S subunit. Its function is as follows. With S5 and S12 plays an important role in translational accuracy. The polypeptide is Small ribosomal subunit protein uS4 (Synechococcus sp. (strain RCC307)).